The sequence spans 108 residues: Large ribosomal subunit protein uL24 (108 aa).

The protein belongs to the universal ribosomal protein uL24 family. Part of the 50S ribosomal subunit.

In terms of biological role, one of two assembly initiator proteins, it binds directly to the 5'-end of the 23S rRNA, where it nucleates assembly of the 50S subunit. Its function is as follows. One of the proteins that surrounds the polypeptide exit tunnel on the outside of the subunit. The protein is Large ribosomal subunit protein uL24 of Mycoplasmopsis pulmonis (strain UAB CTIP) (Mycoplasma pulmonis).